The chain runs to 579 residues: Adipocyte plasma membrane-associated protein Hemomucin (579 aa).

Topologically, residues 1–6 (MGLLYA) are cytoplasmic. A helical transmembrane segment spans residues 7 to 29 (LRVRIMNFMIFFLLIILMPGLPP). Residues 30 to 579 (RTTFPFKDYI…INKQGVNVEL (550 aa)) lie on the Extracellular side of the membrane. N-linked (GlcNAc...) asparagine glycans are attached at residues Asn-213 and Asn-217. The tract at residues 427-579 (GLEASIGVPP…INKQGVNVEL (153 aa)) is disordered. The segment covering 435–529 (PPSKATPKPK…PKPTTTTTPT (95 aa)) has biased composition (low complexity).

It belongs to the strictosidine synthase family. In terms of assembly, interacts with sturkopf. Post-translationally, O-glycosylated. Glycosylated in the ovary of 4 day old females. In terms of processing, phosphorylated. Detected in ovaries (at protein level). In larvae, detected in the fat body, salivary glands, imaginal disks and gut (at protein level). In adults, expressed in the cardia, and in regions of the ventriculus including the area posterior to the cardia. In females also expressed in follicle cells.

It is found in the cell membrane. Functionally, transmembrane mucin that may be involved in cellular adhesion and the innate immune response. Membrane-tethered mucins are involved in many cell surface functions and form a physical barrier around cells to regulate cell-cell and/or cell-substrate interactions, and protect against pathogens or harmful extracellular conditions. This mucin likely acts in hemocyte adhesion as it is released from hemocytes during coagulation and is also able to bind lipophorin particles which form part of the hemocyte coagulogen. Able to induce expression of the antibacterial proteins in the presence of GalNAc-specific lectins and so probably also functions in the innate immune response. The polypeptide is Adipocyte plasma membrane-associated protein Hemomucin (Drosophila melanogaster (Fruit fly)).